A 439-amino-acid chain; its full sequence is Phthalate 4,5-dioxygenase oxygenase subunit (439 aa).

The Rieske domain maps to 27–134; sequence WTPVCLLEEV…TREWGGFVWA (108 aa). Residues cysteine 70, histidine 72, cysteine 89, and histidine 92 each coordinate [2Fe-2S] cluster. The Fe cation site is built by histidine 181 and histidine 186.

Belongs to the bacterial ring-hydroxylating dioxygenase alpha subunit family. As to quaternary structure, this dioxygenase system consists of two proteins: phthalate oxygenase and phthalate oxygenase reductase. It depends on [2Fe-2S] cluster as a cofactor. Fe cation is required as a cofactor.

The catalysed reaction is phthalate + NADH + O2 + H(+) = cis-4,5-dihydroxycyclohexa-2,6-diene-1,2-dicarboxylate + NAD(+). Its pathway is xenobiotic degradation; phthalate degradation; 3,4-dihydroxybenzoate from phthalate: step 1/3. The chain is Phthalate 4,5-dioxygenase oxygenase subunit (pht3) from Pseudomonas putida (Arthrobacter siderocapsulatus).